The primary structure comprises 202 residues: Holliday junction branch migration complex subunit RuvA (202 aa).

The segment at 1 to 64 (MIDFLKGRLV…ETALEMFGFS (64 aa)) is domain I. Positions 65-143 (SELDRTAFLL…KQQVAVSAEL (79 aa)) are domain II. Residues 144 to 152 (PASDGVPVL) form a flexible linker region. The domain III stretch occupies residues 152 to 202 (LAGRAENEALAALISLGYTPREAREALNRLPDRKLDAAGLVHAALRIMGSQ).

This sequence belongs to the RuvA family. Homotetramer. Forms an RuvA(8)-RuvB(12)-Holliday junction (HJ) complex. HJ DNA is sandwiched between 2 RuvA tetramers; dsDNA enters through RuvA and exits via RuvB. An RuvB hexamer assembles on each DNA strand where it exits the tetramer. Each RuvB hexamer is contacted by two RuvA subunits (via domain III) on 2 adjacent RuvB subunits; this complex drives branch migration. In the full resolvosome a probable DNA-RuvA(4)-RuvB(12)-RuvC(2) complex forms which resolves the HJ.

It localises to the cytoplasm. Functionally, the RuvA-RuvB-RuvC complex processes Holliday junction (HJ) DNA during genetic recombination and DNA repair, while the RuvA-RuvB complex plays an important role in the rescue of blocked DNA replication forks via replication fork reversal (RFR). RuvA specifically binds to HJ cruciform DNA, conferring on it an open structure. The RuvB hexamer acts as an ATP-dependent pump, pulling dsDNA into and through the RuvAB complex. HJ branch migration allows RuvC to scan DNA until it finds its consensus sequence, where it cleaves and resolves the cruciform DNA. This is Holliday junction branch migration complex subunit RuvA from Desulforudis audaxviator (strain MP104C).